Consider the following 192-residue polypeptide: Pyridoxal 5'-phosphate synthase subunit PdxT (192 aa).

46–48 is a binding site for L-glutamine; it reads GES. The active-site Nucleophile is C75. Residues R101 and 129–130 each bind L-glutamine; that span reads IR. Catalysis depends on charge relay system residues H166 and E168.

It belongs to the glutaminase PdxT/SNO family. In terms of assembly, in the presence of PdxS, forms a dodecamer of heterodimers. Only shows activity in the heterodimer.

It carries out the reaction aldehydo-D-ribose 5-phosphate + D-glyceraldehyde 3-phosphate + L-glutamine = pyridoxal 5'-phosphate + L-glutamate + phosphate + 3 H2O + H(+). The enzyme catalyses L-glutamine + H2O = L-glutamate + NH4(+). It participates in cofactor biosynthesis; pyridoxal 5'-phosphate biosynthesis. Functionally, catalyzes the hydrolysis of glutamine to glutamate and ammonia as part of the biosynthesis of pyridoxal 5'-phosphate. The resulting ammonia molecule is channeled to the active site of PdxS. The sequence is that of Pyridoxal 5'-phosphate synthase subunit PdxT from Staphylococcus carnosus (strain TM300).